The chain runs to 330 residues: Malate dehydrogenase (330 aa).

Residue 11 to 17 (GGAGQIA) participates in NAD(+) binding. Substrate-binding residues include R92 and R98. Residues N105, Q112, and 129–131 (VGN) each bind NAD(+). The substrate site is built by N131 and R162. H187 functions as the Proton acceptor in the catalytic mechanism.

This sequence belongs to the LDH/MDH superfamily. MDH type 2 family.

The enzyme catalyses (S)-malate + NAD(+) = oxaloacetate + NADH + H(+). Functionally, catalyzes the reversible oxidation of malate to oxaloacetate. The sequence is that of Malate dehydrogenase from Protochlamydia amoebophila (strain UWE25).